Consider the following 440-residue polypeptide: Amino-acid acetyltransferase (440 aa).

Residues 289 to 429 form the N-acetyltransferase domain; that stretch reads ETIRLATVSD…QHYNYQRRSK (141 aa).

Belongs to the acetyltransferase family. ArgA subfamily.

It is found in the cytoplasm. The enzyme catalyses L-glutamate + acetyl-CoA = N-acetyl-L-glutamate + CoA + H(+). Its pathway is amino-acid biosynthesis; L-arginine biosynthesis; N(2)-acetyl-L-ornithine from L-glutamate: step 1/4. This is Amino-acid acetyltransferase (argA) from Pasteurella multocida (strain Pm70).